Consider the following 626-residue polypeptide: DNA-directed RNA polymerase subunit beta C-terminal section (626 aa).

The disordered stretch occupies residues 287-307 (NTKSKNTGKGSKPPRASKAQN).

It belongs to the RNA polymerase beta chain family. In terms of assembly, in plastids the minimal PEP RNA polymerase catalytic core is composed of four subunits: alpha, beta, beta', and beta''. When a (nuclear-encoded) sigma factor is associated with the core the holoenzyme is formed, which can initiate transcription.

Its subcellular location is the plastid. The protein resides in the chloroplast. It catalyses the reaction RNA(n) + a ribonucleoside 5'-triphosphate = RNA(n+1) + diphosphate. DNA-dependent RNA polymerase catalyzes the transcription of DNA into RNA using the four ribonucleoside triphosphates as substrates. The polypeptide is DNA-directed RNA polymerase subunit beta C-terminal section (rpoB2) (Chlamydomonas reinhardtii (Chlamydomonas smithii)).